The primary structure comprises 151 residues: Large ribosomal subunit protein uL13 (151 aa).

It belongs to the universal ribosomal protein uL13 family. In terms of assembly, part of the 50S ribosomal subunit.

Its function is as follows. This protein is one of the early assembly proteins of the 50S ribosomal subunit, although it is not seen to bind rRNA by itself. It is important during the early stages of 50S assembly. This is Large ribosomal subunit protein uL13 from Acaryochloris marina (strain MBIC 11017).